We begin with the raw amino-acid sequence, 100 residues long: Large ribosomal subunit protein uL23 (100 aa).

This sequence belongs to the universal ribosomal protein uL23 family. As to quaternary structure, part of the 50S ribosomal subunit. Contacts protein L29, and trigger factor when it is bound to the ribosome.

In terms of biological role, one of the early assembly proteins it binds 23S rRNA. One of the proteins that surrounds the polypeptide exit tunnel on the outside of the ribosome. Forms the main docking site for trigger factor binding to the ribosome. In Shewanella sp. (strain MR-4), this protein is Large ribosomal subunit protein uL23.